The sequence spans 392 residues: Histidinol-phosphate aminotransferase 2 (392 aa).

Lys-228 carries the N6-(pyridoxal phosphate)lysine modification.

Belongs to the class-II pyridoxal-phosphate-dependent aminotransferase family. Histidinol-phosphate aminotransferase subfamily. As to quaternary structure, homodimer. Pyridoxal 5'-phosphate is required as a cofactor.

It carries out the reaction L-histidinol phosphate + 2-oxoglutarate = 3-(imidazol-4-yl)-2-oxopropyl phosphate + L-glutamate. Its pathway is amino-acid biosynthesis; L-histidine biosynthesis; L-histidine from 5-phospho-alpha-D-ribose 1-diphosphate: step 7/9. This chain is Histidinol-phosphate aminotransferase 2, found in Nitrosospira multiformis (strain ATCC 25196 / NCIMB 11849 / C 71).